Reading from the N-terminus, the 713-residue chain is Polyribonucleotide nucleotidyltransferase (713 aa).

The Mg(2+) site is built by Asp-495 and Asp-501. One can recognise a KH domain in the interval 562–621 (PRLLTLKIPVDMIGLVIGPGGKTIKRIVEETGAKVDIEDDGTVVVSSIDGAKALAAKQII). Residues 631–700 (DKVYLGTVTR…QKGRINLTRR (70 aa)) enclose the S1 motif domain.

This sequence belongs to the polyribonucleotide nucleotidyltransferase family. It depends on Mg(2+) as a cofactor.

It localises to the cytoplasm. It catalyses the reaction RNA(n+1) + phosphate = RNA(n) + a ribonucleoside 5'-diphosphate. Involved in mRNA degradation. Catalyzes the phosphorolysis of single-stranded polyribonucleotides processively in the 3'- to 5'-direction. The protein is Polyribonucleotide nucleotidyltransferase of Gloeobacter violaceus (strain ATCC 29082 / PCC 7421).